Reading from the N-terminus, the 148-residue chain is Snaclec stejaggregin-A subunit beta-3 (148 aa).

The signal sequence occupies residues methionine 1 to alanine 23. The cysteines at positions 27 and 38 are disulfide-linked. In terms of domain architecture, C-type lectin spans tyrosine 34–lysine 145. N-linked (GlcNAc...) asparagine glycosylation is found at asparagine 47 and asparagine 78. Intrachain disulfides connect cysteine 55/cysteine 144 and cysteine 121/cysteine 136.

The protein belongs to the snaclec family. Heteromultimer; disulfide-linked. Expressed by the venom gland.

Its subcellular location is the secreted. Its function is as follows. Interferes with one step of hemostasis (modulation of platelet aggregation, or coagulation cascade, for example). The polypeptide is Snaclec stejaggregin-A subunit beta-3 (Trimeresurus stejnegeri (Chinese green tree viper)).